A 342-amino-acid polypeptide reads, in one-letter code: Ribosomal RNA small subunit methyltransferase H (342 aa).

Residues 36 to 38, Asp-56, Phe-82, Asp-100, and Gln-107 each bind S-adenosyl-L-methionine; that span reads GGH. The interval 311–342 is disordered; sequence GESGMGKGNSAAASRFPTADSPFPASANGDAA.

It belongs to the methyltransferase superfamily. RsmH family.

The protein localises to the cytoplasm. It catalyses the reaction cytidine(1402) in 16S rRNA + S-adenosyl-L-methionine = N(4)-methylcytidine(1402) in 16S rRNA + S-adenosyl-L-homocysteine + H(+). Functionally, specifically methylates the N4 position of cytidine in position 1402 (C1402) of 16S rRNA. The chain is Ribosomal RNA small subunit methyltransferase H from Xanthomonas axonopodis pv. citri (strain 306).